A 1404-amino-acid polypeptide reads, in one-letter code: Probable GPI-anchored adhesin-like protein PGA55 (1404 aa).

The signal sequence occupies residues 1–19 (MVLLCKYKVSWVFVLSVAG). Tandem repeats lie at residues 104–109 (VSSSSS), 136–141 (VSSSSE), 156–161 (VSSSSK), 162–167 (VSSSSE), 183–188 (VSSSSQ), 196–201 (VSSSSE), 203–208 (VSSSSE), 209–214 (VSSSSE), 216–221 (VSSSSE), 222–227 (VSSSSE), 228–233 (VSSSSE), 234–239 (VSSSSQ), 247–252 (VSSSSE), 253–258 (VSSSSS), 261–266 (VSSSSE), 267–272 (VSSSSE), 274–279 (VSSSSE), 280–285 (VSSSSE), 286–291 (VSSSSE), 292–297 (VSSSSE), 298–303 (VSSSSE), 304–309 (VSSSSQ), 317–322 (VSSSSE), 324–329 (VSSSSE), 330–335 (VSSSSE), 336–341 (VSSSSE), 343–348 (VSSSSE), 349–354 (VSSSSE), 355–360 (VSSSSE), 361–366 (VSSSSQ), 374–379 (VSSSSE), 380–385 (VSSSSS), 388–393 (VSSSSE), 394–399 (VSSSSE), 401–406 (VSSSSE), 407–412 (VSSSSE), 413–418 (VSSSSE), 419–424 (VSSSSE), 425–430 (VSSSSE), 431–436 (VSSSSQ), 444–449 (VSSSSE), 450–455 (VSSSSE), 457–462 (VSSSSE), 463–468 (VSSSSE), 469–474 (VSSSSE), 475–480 (VSSSSQ), 488–493 (VSSSSE), 494–500 (VSSSSSE), 502–507 (VSSSSE), 508–513 (VSSSSE), 515–520 (VSSSSE), 521–526 (VSSSSE), 527–532 (VSSSSE), 533–538 (VSSSSQ), 546–551 (VSSSSE), 552–557 (VSSSSS), 560–565 (VSSSSE), 566–571 (VSSSSE), 573–578 (VSSSSE), 579–584 (VSSSSE), 585–590 (VSSSSE), 591–596 (VSSSSQ), 604–609 (VSSSSE), 611–616 (VSSSSE), 617–622 (VSSSSE), 623–628 (VSSSSE), 629–634 (VSSSSE), 635–640 (VSSSSE), 641–646 (VSSSSQ), 654–659 (VSSSSE), 660–665 (VSSSSS), 668–673 (VSSSSE), 674–679 (VSSSSE), 681–686 (VSSSSE), 687–692 (VSSSSE), 693–698 (VSSSSE), 699–704 (VSSSSQ), 712–717 (VSSSSE), 719–724 (VSSSSE), 725–730 (VSSSSE), 731–736 (VSSSSE), 737–742 (VSSSSE), 743–748 (VSSSSE), 749–754 (VSSSSE), 771–776 (VTSSSE), 777–782 (VSSSSQ), and 797–802 (VSSSSE). The 88 X 6 AA approximate tandem repeats stretch occupies residues 104–541 (VSSSSSEVIS…EVSSSSQVTS (438 aa)). Residues 113 to 833 (SSSSEEASSS…VSSSSASSEV (721 aa)) form a disordered region. An N-linked (GlcNAc...) asparagine glycan is attached at N817. One copy of the 1-88 repeat lies at 824–829 (VSSSSA). N-linked (GlcNAc...) asparagine glycans are attached at residues N994 and N1074. N1382 carries the GPI-anchor amidated asparagine lipid modification. Residues 1383-1404 (AASRQSFNYKFIVGLILAYIIA) constitute a propeptide, removed in mature form.

Its subcellular location is the cell membrane. Functionally, predicted GPI-anchored adhesin-like protein which may be involved in filamentous growth and chlamydospore formation. This Candida albicans (strain SC5314 / ATCC MYA-2876) (Yeast) protein is Probable GPI-anchored adhesin-like protein PGA55 (PGA55).